A 250-amino-acid chain; its full sequence is 5-oxoprolinase subunit A (250 aa).

Belongs to the LamB/PxpA family. Forms a complex composed of PxpA, PxpB and PxpC.

It carries out the reaction 5-oxo-L-proline + ATP + 2 H2O = L-glutamate + ADP + phosphate + H(+). Its function is as follows. Catalyzes the cleavage of 5-oxoproline to form L-glutamate coupled to the hydrolysis of ATP to ADP and inorganic phosphate. The protein is 5-oxoprolinase subunit A of Paraburkholderia xenovorans (strain LB400).